We begin with the raw amino-acid sequence, 127 residues long: Large ribosomal subunit protein uL24 (127 aa).

Belongs to the universal ribosomal protein uL24 family. Part of the 50S ribosomal subunit.

Its function is as follows. One of two assembly initiator proteins, it binds directly to the 5'-end of the 23S rRNA, where it nucleates assembly of the 50S subunit. In terms of biological role, one of the proteins that surrounds the polypeptide exit tunnel on the outside of the subunit. The sequence is that of Large ribosomal subunit protein uL24 from Leptospira biflexa serovar Patoc (strain Patoc 1 / ATCC 23582 / Paris).